A 72-amino-acid polypeptide reads, in one-letter code: Peptide Ctri9194 (72 aa).

An N-terminal signal peptide occupies residues 1–23; the sequence is MKTQNVLLSFGIVFLMISFSSET. I38 carries the isoleucine amide modification. A propeptide spanning residues 42-72 is cleaved from the precursor; sequence SLKDVESLDFLFDPTFTAADLAVLENALEDY.

Belongs to the non-disulfide-bridged peptide (NDBP) superfamily. Short antimicrobial peptide (group 4) family. Expressed by the venom gland.

The protein localises to the secreted. Antimicrobial peptide. The protein is Peptide Ctri9194 of Chaerilus tricostatus (Scorpion).